Reading from the N-terminus, the 341-residue chain is L-threonine 3-dehydrogenase (341 aa).

C38 serves as a coordination point for Zn(2+). Active-site charge relay system residues include T40 and H43. H63, E64, C93, C96, C99, and C107 together coordinate Zn(2+). Residues I175, D195, R200, 262–264 (LGI), and 286–287 (IY) contribute to the NAD(+) site.

It belongs to the zinc-containing alcohol dehydrogenase family. In terms of assembly, homotetramer. Zn(2+) is required as a cofactor.

The protein localises to the cytoplasm. It carries out the reaction L-threonine + NAD(+) = (2S)-2-amino-3-oxobutanoate + NADH + H(+). The protein operates within amino-acid degradation; L-threonine degradation via oxydo-reductase pathway; glycine from L-threonine: step 1/2. Functionally, catalyzes the NAD(+)-dependent oxidation of L-threonine to 2-amino-3-ketobutyrate. The polypeptide is L-threonine 3-dehydrogenase (Escherichia fergusonii (strain ATCC 35469 / DSM 13698 / CCUG 18766 / IAM 14443 / JCM 21226 / LMG 7866 / NBRC 102419 / NCTC 12128 / CDC 0568-73)).